Here is a 414-residue protein sequence, read N- to C-terminus: tRNA(Ile)-lysidine synthase (414 aa).

Position 13-18 (13-18 (SGGIDS)) interacts with ATP.

The protein belongs to the tRNA(Ile)-lysidine synthase family.

The protein localises to the cytoplasm. The enzyme catalyses cytidine(34) in tRNA(Ile2) + L-lysine + ATP = lysidine(34) in tRNA(Ile2) + AMP + diphosphate + H(+). Its function is as follows. Ligates lysine onto the cytidine present at position 34 of the AUA codon-specific tRNA(Ile) that contains the anticodon CAU, in an ATP-dependent manner. Cytidine is converted to lysidine, thus changing the amino acid specificity of the tRNA from methionine to isoleucine. The chain is tRNA(Ile)-lysidine synthase from Thermotoga sp. (strain RQ2).